The chain runs to 194 residues: CD-NTase-associated protein 15 (194 aa).

The segment at 1 to 73 (MRMWELLPSK…DYLKHKFCPD (73 aa)) is required for cell toxicity. Helical transmembrane passes span 15 to 35 (ISTI…GQPV) and 43 to 63 (ITTI…YFYI).

It belongs to the CBASS Cap15 membrane effector family. As to quaternary structure, the beta barrel domain oligomerizes; in the presence of cyclic nucleotides (probably 3',3'-cGAMP, but the cognate CD-NTase makes at least 4 other cyclic nucleotides) higher-level oligomers are detected.

Its subcellular location is the cell inner membrane. Its function is as follows. Effector protein of a CBASS antivirus system. CBASS (cyclic oligonucleotide-based antiphage signaling system) provides immunity against bacteriophages. The CD-NTase protein (CdnB) synthesizes cyclic nucleotides in response to infection; these serve as specific second messenger signals. The signals activate a diverse range of effectors, leading to bacterial cell death and thus abortive phage infection. Causes cell death in response to 3',3'-cGAMP upon coexpression in E.coli with V.cholerae DncV; inactivating DncV prevents cell death. Upon induction in E.coli with non-cognate DncV, the cell inner membrane shrinks and separates from the cell wall with a concomitant increase in the periplasm. Binds cyclic nucleotide second messenger 3',3'-cGAMP, probably oligomerizing, and induces cell membrane shrinkage and rupture, leading to cell death. A type I CBASS system. In terms of biological role, protects E.coli against phage infection. When the CBASS operon (cdnB-cap15) is introduced in E.coli MG1655 there is about 100-fold protection against phage T2 and about 10-fold protection against phage T5 and T6. This Escherichia albertii protein is CD-NTase-associated protein 15.